Consider the following 372-residue polypeptide: Ligninase A (372 aa).

Positions 1–21 (MAFKQLVAAISLALSLTTANA) are cleaved as a signal peptide. A propeptide spanning residues 22–28 (AVVKEKR) is cleaved from the precursor. Disulfide bonds link C31–C43, C42–C313, C62–C148, and C277–C345. H75 serves as the catalytic Proton acceptor. Ca(2+) contacts are provided by D76, G94, D96, and S98. H204 contributes to the heme b binding site. Ca(2+) is bound by residues S205, D222, T224, I227, and D229. The N-linked (GlcNAc...) asparagine glycan is linked to N285.

The protein belongs to the peroxidase family. Ligninase subfamily. Heme b serves as cofactor. Ca(2+) is required as a cofactor.

The enzyme catalyses 1-(3,4-dimethoxyphenyl)-2-(2-methoxyphenoxy)propane-1,3-diol + H2O2 = 3,4-dimethoxybenzaldehyde + guaiacol + glycolaldehyde + H2O. It carries out the reaction 2 (3,4-dimethoxyphenyl)methanol + H2O2 = 2 (3,4-dimethoxyphenyl)methanol radical + 2 H2O. The protein operates within secondary metabolite metabolism; lignin degradation. In terms of biological role, depolymerization of lignin. Catalyzes the C(alpha)-C(beta) cleavage of the propyl side chains of lignin. The protein is Ligninase A (LIPA) of Phanerodontia chrysosporium (White-rot fungus).